Reading from the N-terminus, the 308-residue chain is Porphobilinogen deaminase (308 aa).

Cys-242 is modified (S-(dipyrrolylmethanemethyl)cysteine).

Belongs to the HMBS family. In terms of assembly, monomer. The cofactor is dipyrromethane.

The enzyme catalyses 4 porphobilinogen + H2O = hydroxymethylbilane + 4 NH4(+). It participates in porphyrin-containing compound metabolism; protoporphyrin-IX biosynthesis; coproporphyrinogen-III from 5-aminolevulinate: step 2/4. Its function is as follows. Tetrapolymerization of the monopyrrole PBG into the hydroxymethylbilane pre-uroporphyrinogen in several discrete steps. This is Porphobilinogen deaminase from Alkalilimnicola ehrlichii (strain ATCC BAA-1101 / DSM 17681 / MLHE-1).